The primary structure comprises 445 residues: Histidinol dehydrogenase (445 aa).

NAD(+) contacts are provided by tyrosine 136, glutamine 200, and asparagine 228. Positions 251, 273, and 276 each coordinate substrate. Glutamine 273 and histidine 276 together coordinate Zn(2+). Residues glutamate 342 and histidine 343 each act as proton acceptor in the active site. Positions 343, 376, 430, and 435 each coordinate substrate. Zn(2+) is bound at residue aspartate 376. Histidine 435 is a Zn(2+) binding site.

Belongs to the histidinol dehydrogenase family. It depends on Zn(2+) as a cofactor.

It carries out the reaction L-histidinol + 2 NAD(+) + H2O = L-histidine + 2 NADH + 3 H(+). Its pathway is amino-acid biosynthesis; L-histidine biosynthesis; L-histidine from 5-phospho-alpha-D-ribose 1-diphosphate: step 9/9. Functionally, catalyzes the sequential NAD-dependent oxidations of L-histidinol to L-histidinaldehyde and then to L-histidine. This is Histidinol dehydrogenase (hisD) from Mycolicibacterium smegmatis (Mycobacterium smegmatis).